Here is a 361-residue protein sequence, read N- to C-terminus: Putative F-box protein At3g18340 (361 aa).

An F-box domain is found at 1–46; the sequence is MASGKLPWELEEEILCRLPPGSLVRLRSVCKHWNDLYNDKWFIKKS.

This chain is Putative F-box protein At3g18340, found in Arabidopsis thaliana (Mouse-ear cress).